A 122-amino-acid polypeptide reads, in one-letter code: Large ribosomal subunit protein uL18 (122 aa).

The protein belongs to the universal ribosomal protein uL18 family. In terms of assembly, part of the 50S ribosomal subunit; part of the 5S rRNA/L5/L18/L25 subcomplex. Contacts the 5S and 23S rRNAs.

This is one of the proteins that bind and probably mediate the attachment of the 5S RNA into the large ribosomal subunit, where it forms part of the central protuberance. This is Large ribosomal subunit protein uL18 from Thermosipho africanus (strain TCF52B).